A 1373-amino-acid polypeptide reads, in one-letter code: Capping protein, Arp2/3 and myosin-I linker protein 3 (1373 aa).

Positions 126 to 151 (RGNADTPEGPRDTSPNSETSTSTTHS) are disordered. The segment covering 138-151 (TSPNSETSTSTTHS) has biased composition (low complexity). 10 LRR repeats span residues 242 to 269 (SGSL…VFGE), 272 to 299 (SCVL…QLLC), 333 to 358 (ASSL…ALYS), 390 to 417 (CSHL…AFKQ), 422 to 446 (AYTL…LLQG), 453 to 475 (LSDL…ALQE), 480 to 507 (VTCI…LGKN), 510 to 536 (LKHL…LVQL), 541 to 564 (DCSL…LINA), and 568 to 591 (NTCL…MLSK). 2 disordered regions span residues 864–902 (RTLS…TNID) and 970–1373 (LRHQ…PGTD). Residues 981-997 (PRTTPPGPGRPSVPVPG) show a composition bias toward pro residues. The span at 1007-1022 (RLDEGLEDFFSRRVMD) shows a compositional bias: basic and acidic residues. Over residues 1047 to 1062 (QKRRRRGLFHFRRPRS) the composition is skewed to basic residues. Positions 1078–1097 (LPPPPPPPPTQESPPSPDPP) are enriched in pro residues. Positions 1098 to 1108 (SLGNNSSPCWS) are enriched in low complexity. Residues 1218-1228 (RRAEATWHIAE) show a composition bias toward basic and acidic residues. Over residues 1232 to 1243 (PNHSCQSPSPAS) the composition is skewed to polar residues. The segment covering 1269 to 1278 (PIGPRPPKPV) has biased composition (pro residues). Positions 1345–1358 (QSCDKLEPDRRRPP) are enriched in basic and acidic residues.

Belongs to the CARMIL family. As to expression, widely expressed, with much higher levels in fetal tissues than in adult ones. Highly expressed in newborn brain.

The protein resides in the cytoplasm. It localises to the cell membrane. This Rattus norvegicus (Rat) protein is Capping protein, Arp2/3 and myosin-I linker protein 3 (Carmil3).